A 278-amino-acid polypeptide reads, in one-letter code: Cytidine kinase (278 aa).

An ATP-binding site is contributed by 203 to 208 (TRGEKG). Asp237 acts as the Proton acceptor in catalysis.

Belongs to the carbohydrate kinase PfkB family. The cofactor is Mg(2+).

It catalyses the reaction cytidine + ATP = CMP + ADP + H(+). Its function is as follows. Involved in nucleoside degradation. Phosphorylates cytidine to CMP. Can also act on deoxycytidine and uridine, but is most active with cytidine. ATP is the most preferred phosphate donor, but it can also use GTP, CTP or UTP. The polypeptide is Cytidine kinase (Thermococcus kodakarensis (strain ATCC BAA-918 / JCM 12380 / KOD1) (Pyrococcus kodakaraensis (strain KOD1))).